Here is a 560-residue protein sequence, read N- to C-terminus: Muellerian-inhibiting factor (560 aa).

Residues 1-24 (MRDLPLTSLALVLSALGALLGTEA) form the signal peptide. A propeptide spanning residues 25-451 (LRAEEPAVGT…DPRGPGRAQR (427 aa)) is cleaved from the precursor. N-linked (GlcNAc...) asparagine glycosylation occurs at Asn64. Positions 259 to 287 (PLPAHGQLDTVPFPPPRPSAELEESPPSA) are disordered. Residue Asn329 is glycosylated (N-linked (GlcNAc...) asparagine). Cystine bridges form between Cys462–Cys526, Cys488–Cys557, and Cys492–Cys559.

The protein belongs to the TGF-beta family. As to quaternary structure, homodimer; disulfide-linked. In terms of processing, preproprotein is proteolytically processed to generate N- and C-terminal cleavage products that homodimerize and associate to form a biologically active non-covalent complex. Binding of the non-covalent complex to AMHR2 induces dissociation of the pro-region from the mature C-terminal dimer. The N-terminal portion of the protein, despite having no intrinsic activity, has the role of amplifying the activity of the C-terminus. In terms of tissue distribution, in ovaries, AMH is detected in granulosa cells of early growing follicles.

The protein resides in the secreted. Functionally, plays an important role in several reproductive functions. Induces Muellerian duct regression during male fetal sexual differentiation. Also plays a role in Leydig cell differentiation and function. In female acts as a negative regulator of the primordial to primary follicle transition and decreases FSH sensitivity of growing follicles. AMH signals by binding to a specific type-II receptor, AMHR2, that heterodimerizes with type-I receptors (ACVR1 and BMPR1A), and recruiting SMAD proteins that are translocated to the nucleus to regulate target gene expression. The protein is Muellerian-inhibiting factor of Homo sapiens (Human).